The primary structure comprises 391 residues: Na(+)/H(+) antiporter NhaA 1 (391 aa).

11 helical membrane-spanning segments follow: residues 25–45 (AGGIVLMVAALAALIVANSPL), 56–76 (VWLGLSVELWINDGLMAIFFL), 98–118 (ALPGFAAAGGMLVPALIYIAI), 128–148 (GWAIPAATDIAFALGVLSLLG), 157–177 (VFLAALAILDDLGAVTIIAFF), 180–200 (AGLNLPMLAAAFVTLAVLIVM), 208–228 (LLPYLLLGALLWFFVLQSGVH), 264–284 (VAFAVVPIFGFANAGVSLAGI), 297–317 (VALGLFVGKQIGVFLAAVLAI), 335–355 (GVAMLCGIGFTMSLFIGNLAF), and 364–384 (EVKVGVLIGSGLAAIAGIVLL).

The protein belongs to the NhaA Na(+)/H(+) (TC 2.A.33) antiporter family.

The protein resides in the cell inner membrane. It carries out the reaction Na(+)(in) + 2 H(+)(out) = Na(+)(out) + 2 H(+)(in). Na(+)/H(+) antiporter that extrudes sodium in exchange for external protons. The polypeptide is Na(+)/H(+) antiporter NhaA 1 (Pseudomonas syringae pv. syringae (strain B728a)).